Here is a 230-residue protein sequence, read N- to C-terminus: Flagellar L-ring protein (230 aa).

Residues 1 to 26 (MKQVRLLPSATVRAACAVAVAAFAAG) form the signal peptide. Cys-27 is lipidated: N-palmitoyl cysteine. Cys-27 is lipidated: S-diacylglycerol cysteine.

This sequence belongs to the FlgH family. As to quaternary structure, the basal body constitutes a major portion of the flagellar organelle and consists of four rings (L,P,S, and M) mounted on a central rod.

The protein localises to the cell outer membrane. It localises to the bacterial flagellum basal body. In terms of biological role, assembles around the rod to form the L-ring and probably protects the motor/basal body from shearing forces during rotation. The protein is Flagellar L-ring protein of Burkholderia lata (strain ATCC 17760 / DSM 23089 / LMG 22485 / NCIMB 9086 / R18194 / 383).